A 624-amino-acid chain; its full sequence is UvrABC system protein C (624 aa).

In terms of domain architecture, GIY-YIG spans 27 to 105 (LSPGVYRMLS…IKSLGPRYNI (79 aa)). Positions 215–250 (RRVQHDLTARMESAAEAMEYEAAAVFRDRIRALTRI) constitute a UVR domain.

This sequence belongs to the UvrC family. In terms of assembly, interacts with UvrB in an incision complex.

It localises to the cytoplasm. Functionally, the UvrABC repair system catalyzes the recognition and processing of DNA lesions. UvrC both incises the 5' and 3' sides of the lesion. The N-terminal half is responsible for the 3' incision and the C-terminal half is responsible for the 5' incision. The polypeptide is UvrABC system protein C (Paramagnetospirillum magneticum (strain ATCC 700264 / AMB-1) (Magnetospirillum magneticum)).